The primary structure comprises 500 residues: Cobyric acid synthase (500 aa).

In terms of domain architecture, GATase cobBQ-type spans 253–446 (KIGVAAIYFP…FHGFFDRPEV (194 aa)). C334 functions as the Nucleophile in the catalytic mechanism. The active site involves H438.

This sequence belongs to the CobB/CobQ family. CobQ subfamily.

It functions in the pathway cofactor biosynthesis; adenosylcobalamin biosynthesis. In terms of biological role, catalyzes amidations at positions B, D, E, and G on adenosylcobyrinic A,C-diamide. NH(2) groups are provided by glutamine, and one molecule of ATP is hydrogenolyzed for each amidation. The chain is Cobyric acid synthase from Chlorobaculum tepidum (strain ATCC 49652 / DSM 12025 / NBRC 103806 / TLS) (Chlorobium tepidum).